We begin with the raw amino-acid sequence, 193 residues long: Pyridoxal 5'-phosphate synthase subunit PdxT (193 aa).

50-52 (GES) contributes to the L-glutamine binding site. Cys-82 (nucleophile) is an active-site residue. Residues Arg-109 and 136–137 (IR) contribute to the L-glutamine site. Active-site charge relay system residues include His-172 and Glu-174.

The protein belongs to the glutaminase PdxT/SNO family. In the presence of PdxS, forms a dodecamer of heterodimers. Only shows activity in the heterodimer.

The catalysed reaction is aldehydo-D-ribose 5-phosphate + D-glyceraldehyde 3-phosphate + L-glutamine = pyridoxal 5'-phosphate + L-glutamate + phosphate + 3 H2O + H(+). It carries out the reaction L-glutamine + H2O = L-glutamate + NH4(+). The protein operates within cofactor biosynthesis; pyridoxal 5'-phosphate biosynthesis. Functionally, catalyzes the hydrolysis of glutamine to glutamate and ammonia as part of the biosynthesis of pyridoxal 5'-phosphate. The resulting ammonia molecule is channeled to the active site of PdxS. This is Pyridoxal 5'-phosphate synthase subunit PdxT from Streptococcus pneumoniae (strain JJA).